Reading from the N-terminus, the 190-residue chain is Signal peptidase I W (190 aa).

A helical transmembrane segment spans residues 4–24; it reads ISNILYVIIFTLIIVLTLVVI. Residue S45 is part of the active site. The helical transmembrane segment at 143-163 threads the bilayer; it reads PIGTAVLLIVPGVMLLVYAFV.

Belongs to the peptidase S26B family.

The protein localises to the cell membrane. The catalysed reaction is Cleavage of hydrophobic, N-terminal signal or leader sequences from secreted and periplasmic proteins.. Its function is as follows. Required for the cleavage of the signal sequence of TasA and TapA, which are involved in biofilm formation. This chain is Signal peptidase I W, found in Bacillus subtilis (strain 168).